Here is a 95-residue protein sequence, read N- to C-terminus: Aspartyl/glutamyl-tRNA(Asn/Gln) amidotransferase subunit C (95 aa).

Belongs to the GatC family. Heterotrimer of A, B and C subunits.

The enzyme catalyses L-glutamyl-tRNA(Gln) + L-glutamine + ATP + H2O = L-glutaminyl-tRNA(Gln) + L-glutamate + ADP + phosphate + H(+). The catalysed reaction is L-aspartyl-tRNA(Asn) + L-glutamine + ATP + H2O = L-asparaginyl-tRNA(Asn) + L-glutamate + ADP + phosphate + 2 H(+). Allows the formation of correctly charged Asn-tRNA(Asn) or Gln-tRNA(Gln) through the transamidation of misacylated Asp-tRNA(Asn) or Glu-tRNA(Gln) in organisms which lack either or both of asparaginyl-tRNA or glutaminyl-tRNA synthetases. The reaction takes place in the presence of glutamine and ATP through an activated phospho-Asp-tRNA(Asn) or phospho-Glu-tRNA(Gln). The polypeptide is Aspartyl/glutamyl-tRNA(Asn/Gln) amidotransferase subunit C (Bradyrhizobium sp. (strain BTAi1 / ATCC BAA-1182)).